The following is a 160-amino-acid chain: Cytochrome b6-f complex subunit 4 (160 aa).

3 helical membrane-spanning segments follow: residues 36-56 (LLYI…GLAV), 95-115 (LLGV…PFLE), and 131-151 (TVFL…TLPI).

This sequence belongs to the cytochrome b family. PetD subfamily. In terms of assembly, the 4 large subunits of the cytochrome b6-f complex are cytochrome b6, subunit IV (17 kDa polypeptide, petD), cytochrome f and the Rieske protein, while the 4 small subunits are petG, petL, petM and petN. The complex functions as a dimer.

The protein localises to the plastid. It is found in the chloroplast thylakoid membrane. Its function is as follows. Component of the cytochrome b6-f complex, which mediates electron transfer between photosystem II (PSII) and photosystem I (PSI), cyclic electron flow around PSI, and state transitions. The protein is Cytochrome b6-f complex subunit 4 of Solanum tuberosum (Potato).